A 187-amino-acid chain; its full sequence is UPF0301 protein ECA3925 (187 aa).

It belongs to the UPF0301 (AlgH) family.

The sequence is that of UPF0301 protein ECA3925 from Pectobacterium atrosepticum (strain SCRI 1043 / ATCC BAA-672) (Erwinia carotovora subsp. atroseptica).